A 149-amino-acid polypeptide reads, in one-letter code: MNKGQRHIKIREIIMSHDIETQDELVDMLKKAGFNVTQATVSRDIKEMQLVKVPMANGRYKYSLPSDQRFNPVQKLKRALMDVFIKLDGAGNLLVLKTLPGNAHAIGVLLDNLDWNEIVGTICGDDTCLIICRTAEDAEKVSKQLLEML.

It belongs to the ArgR family.

The protein localises to the cytoplasm. It functions in the pathway amino-acid biosynthesis; L-arginine biosynthesis [regulation]. In terms of biological role, regulates arginine biosynthesis genes. The chain is Arginine repressor from Geobacillus sp. (strain WCH70).